The primary structure comprises 44 residues: Photosystem I reaction center subunit IX (44 aa).

Residues 7-27 form a helical membrane-spanning segment; that stretch reads YLSVAPVLSTLSLGFFAGFLI.

It belongs to the PsaJ family.

It is found in the plastid membrane. In terms of biological role, may help in the organization of the PsaE and PsaF subunits. The chain is Photosystem I reaction center subunit IX from Cuscuta obtusiflora (Peruvian dodder).